We begin with the raw amino-acid sequence, 637 residues long: Neutral ceramidase (637 aa).

A Mg(2+)-binding site is contributed by histidine 34. Residues histidine 96 and histidine 204 each contribute to the Zn(2+) site. Residue serine 256 is the Nucleophile of the active site. 2 residues coordinate Zn(2+): glutamate 417 and tyrosine 453. Positions 575, 577, and 580 each coordinate Mg(2+).

Belongs to the neutral ceramidase family. Zn(2+) serves as cofactor. The cofactor is Mg(2+).

It catalyses the reaction an N-acylsphing-4-enine + H2O = sphing-4-enine + a fatty acid. The enzyme catalyses an N-acylsphinganine + H2O = sphinganine + a fatty acid. The catalysed reaction is an N-acyl-(4R)-4-hydroxysphinganine + H2O = (4R)-hydroxysphinganine + a fatty acid. It carries out the reaction N-(9Z-octadecenoyl)-sphing-4-enine + H2O = sphing-4-enine + (9Z)-octadecenoate. It catalyses the reaction N-(hexanoyl)sphing-4-enine + H2O = hexanoate + sphing-4-enine. The enzyme catalyses N-hexadecanoylsphing-4-enine + H2O = sphing-4-enine + hexadecanoate. The catalysed reaction is N-octadecanoylsphing-4-enine + H2O = sphing-4-enine + octadecanoate. It carries out the reaction N-eicosanoyl-sphing-4-enine + H2O = eicosanoate + sphing-4-enine. It catalyses the reaction N-(15Z-tetracosenoyl)-sphing-4-enine + H2O = (15Z)-tetracosenoate + sphing-4-enine. The enzyme catalyses N-tetracosanoyl-sphing-4-enine + H2O = tetracosanoate + sphing-4-enine. With respect to regulation, 90% of activity is inhibited by nickel, zinc and calcium ions. Magnesium, cobalt, copper and manganese ions inhibit between 50 and 80% of activity. Functionally, catalyzes the cleavage of the N-acyl linkage of the ceramides (Cers) to yield sphingosine (Sph) and free fatty acid. Also catalyzes the synthesis of Cers from Sph and fatty acid. Cers containning C6-C24 fatty acids are well hydrolyzed, and Cers with mono unsaturated fatty acids are much more hydrolyzed than those with saturated fatty acids. The protein is Neutral ceramidase of Mycobacterium tuberculosis (strain ATCC 25618 / H37Rv).